The sequence spans 375 residues: Succinyl-diaminopimelate desuccinylase (375 aa).

H66 is a binding site for Zn(2+). Residue D68 is part of the active site. Residue D99 coordinates Zn(2+). The active-site Proton acceptor is the E133. Zn(2+) is bound by residues E134, E162, and H348.

The protein belongs to the peptidase M20A family. DapE subfamily. As to quaternary structure, homodimer. The cofactor is Zn(2+). Requires Co(2+) as cofactor.

It catalyses the reaction N-succinyl-(2S,6S)-2,6-diaminopimelate + H2O = (2S,6S)-2,6-diaminopimelate + succinate. Its pathway is amino-acid biosynthesis; L-lysine biosynthesis via DAP pathway; LL-2,6-diaminopimelate from (S)-tetrahydrodipicolinate (succinylase route): step 3/3. Catalyzes the hydrolysis of N-succinyl-L,L-diaminopimelic acid (SDAP), forming succinate and LL-2,6-diaminopimelate (DAP), an intermediate involved in the bacterial biosynthesis of lysine and meso-diaminopimelic acid, an essential component of bacterial cell walls. This Enterobacter sp. (strain 638) protein is Succinyl-diaminopimelate desuccinylase.